A 575-amino-acid chain; its full sequence is Putative export ATP-binding/permease protein RBE_0492 (575 aa).

Positions 20–303 constitute an ABC transmembrane type-1 domain; sequence LIIVIISLLS…IFELLSEMHL (284 aa). Helical transmembrane passes span 21-41, 61-81, 135-155, 158-178, 242-262, and 277-297; these read IIVI…GNVF, ILYI…RSYF, FLSF…LMFF, FKLA…IIKF, ALFF…VIWI, and IISF…IFEL. The ABC transporter domain maps to 336 to 571; sequence LEFKNVNFSY…SDLYRTIYKE (236 aa). 371 to 378 provides a ligand contact to ATP; it reads GRSGSGKS.

Belongs to the ABC transporter superfamily. In terms of assembly, homodimer.

It is found in the cell inner membrane. Functionally, part of an ABC transporter complex. Transmembrane domains (TMD) form a pore in the inner membrane and the ATP-binding domain (NBD) is responsible for energy generation. This chain is Putative export ATP-binding/permease protein RBE_0492, found in Rickettsia bellii (strain RML369-C).